The following is a 332-amino-acid chain: MARDVLTLSRHVLQQFSGFTPEAQDFSALMNRIALAGKMIARRLSQAGLIEGTLGVTGSVNVQGEEQQRMDDYANRAFIRALEQTGLVCRLVSEELKTPARLPENCSLSRLALLIDPLDGSSNIDANLSVGSIFSVLHPLEDRPEADNQDLLQPGRRQLAAGYILYGPSTQLVYSVGKGVHSFTLDPSLGEFILSKSDLRIPERGSVYSLNEGYFCQWSEGIQNYVRYVHRRDGYTARYSGALVADFHRILLQGGVYLYPGTRQKPEGKLRLMYEANPLAFLAEQAGGVATTGTEAILDIVPQSLHQRVPLIIGSRKNVEEVLRCLEGSLTP.

Glu-94, Asp-116, Leu-118, and Asp-119 together coordinate Mg(2+). Residues 119-122 (DGSS), Asn-211, Tyr-239, 257-259 (YLY), and Lys-269 contribute to the substrate site. Glu-275 serves as a coordination point for Mg(2+).

This sequence belongs to the FBPase class 1 family. Homotetramer. It depends on Mg(2+) as a cofactor.

Its subcellular location is the cytoplasm. The catalysed reaction is beta-D-fructose 1,6-bisphosphate + H2O = beta-D-fructose 6-phosphate + phosphate. It participates in carbohydrate biosynthesis; Calvin cycle. The sequence is that of Fructose-1,6-bisphosphatase class 1 from Synechococcus sp. (strain JA-3-3Ab) (Cyanobacteria bacterium Yellowstone A-Prime).